The following is a 721-amino-acid chain: Transcription activator of gluconeogenesis ARB_05058 (721 aa).

Residues 1–34 (MSPHQTTGQESDNMTVNGENAQASSQYIQSNEEM) are compositionally biased toward polar residues. The disordered stretch occupies residues 1 to 62 (MSPHQTTGQE…PSRPKRKKAK (62 aa)). The span at 40-55 (TEKKASTAKAAKDPSR) shows a compositional bias: basic and acidic residues. Positions 65 to 93 (CYACQRGHLTCGDERPCQRCIKRGFQDAC) form a DNA-binding region, zn(2)-C6 fungal-type. Disordered regions lie at residues 128–224 (QNNA…FNSA), 263–300 (GDTP…SNQA), 353–400 (SPAS…TPQL), 533–567 (NHNV…YNSS), and 635–666 (GLNG…QRRW). Polar residues-rich tracts occupy residues 133–213 (GSNT…TPSA), 267–277 (PSESGAQRGSI), 287–300 (LTGS…SNQA), and 361–379 (MMTT…GAFN). Low complexity-rich tracts occupy residues 380–399 (SRQN…STPQ) and 543–553 (GLMTGSTSRGS). A compositionally biased stretch (polar residues) spans 640–661 (AASNETNELNGSLTNGATTNGR).

It belongs to the ERT1/acuK family.

It is found in the nucleus. Functionally, transcription factor which regulates nonfermentable carbon utilization. Activator of gluconeogenetic genes. The sequence is that of Transcription activator of gluconeogenesis ARB_05058 from Arthroderma benhamiae (strain ATCC MYA-4681 / CBS 112371) (Trichophyton mentagrophytes).